The following is a 245-amino-acid chain: Myelin protein P0 (245 aa).

The signal sequence occupies residues methionine 1–alanine 28. Residues isoleucine 29–glutamine 143 form the Ig-like V-type domain. The Extracellular portion of the chain corresponds to isoleucine 29–glycine 153. Cysteine 49 and cysteine 125 are disulfide-bonded. Asparagine 120 carries N-linked (GlcNAc...) asparagine glycosylation. A helical membrane pass occupies residues leucine 154–isoleucine 174. Residues leucine 175–lysine 245 lie on the Cytoplasmic side of the membrane. Composition is skewed to basic and acidic residues over residues lysine 199–lysine 208 and threonine 224–lysine 245. The disordered stretch occupies residues lysine 199–lysine 245.

Belongs to the myelin P0 protein family.

The protein resides in the cell membrane. In terms of biological role, creation of an extracellular membrane face which guides the wrapping process and ultimately compacts adjacent lamellae. The polypeptide is Myelin protein P0 (mpz) (Xenopus laevis (African clawed frog)).